Here is a 151-residue protein sequence, read N- to C-terminus: Putative pre-16S rRNA nuclease (151 aa).

This sequence belongs to the YqgF nuclease family.

Its subcellular location is the cytoplasm. Functionally, could be a nuclease involved in processing of the 5'-end of pre-16S rRNA. This Onion yellows phytoplasma (strain OY-M) protein is Putative pre-16S rRNA nuclease.